A 137-amino-acid polypeptide reads, in one-letter code: Gonadotropin subunit beta-2 (137 aa).

An N-terminal signal peptide occupies residues 1-24; that stretch reads MLPFMLSSFLGASPSIWPLAPAEA. Disulfide bonds link Cys-30–Cys-76, Cys-44–Cys-91, Cys-47–Cys-129, Cys-55–Cys-107, Cys-59–Cys-109, and Cys-112–Cys-119. Asn-34 carries an N-linked (GlcNAc...) asparagine glycan.

The protein belongs to the glycoprotein hormones subunit beta family. As to quaternary structure, heterodimer of an alpha and a beta chain.

It is found in the secreted. Involved in gametogenesis and steroidogenesis. This is Gonadotropin subunit beta-2 (cgbb) from Acanthopagrus latus (Yellowfin seabream).